The chain runs to 146 residues: Large-conductance mechanosensitive channel (146 aa).

A run of 2 helical transmembrane segments spans residues Ala12 to Phe32 and Leu88 to Ile108.

The protein belongs to the MscL family. As to quaternary structure, homopentamer.

The protein localises to the cell inner membrane. In terms of biological role, channel that opens in response to stretch forces in the membrane lipid bilayer. May participate in the regulation of osmotic pressure changes within the cell. In Bacteroides fragilis (strain ATCC 25285 / DSM 2151 / CCUG 4856 / JCM 11019 / LMG 10263 / NCTC 9343 / Onslow / VPI 2553 / EN-2), this protein is Large-conductance mechanosensitive channel.